A 269-amino-acid polypeptide reads, in one-letter code: Holocytochrome-c synthase (269 aa).

A disordered region spans residues 1-72 (MGWFWADQKT…ASKQPGQKMD (72 aa)). 2 HRM repeats span residues 25–30 (GCPVMH) and 41–46 (ECPVMQ).

The protein belongs to the cytochrome c-type heme lyase family.

The protein localises to the mitochondrion inner membrane. It is found in the mitochondrion intermembrane space. It catalyses the reaction holo-[cytochrome c] = apo-[cytochrome c] + heme b. Functionally, lyase that catalyzes the covalent linking of the heme group to the cytochrome C apoprotein to produce the mature functional cytochrome. This Saccharomyces cerevisiae (strain ATCC 204508 / S288c) (Baker's yeast) protein is Holocytochrome-c synthase (CYC3).